Consider the following 334-residue polypeptide: Putative peptide import ATP-binding protein BAB2_1053 (334 aa).

Residues 22–272 (VRTDDLVRDF…PLHPYSRALL (251 aa)) form the ABC transporter domain. Residue 64 to 71 (GESGSGKS) coordinates ATP.

This sequence belongs to the ABC transporter superfamily. In terms of assembly, the complex is composed of two ATP-binding proteins (BAB2_1052 and BAB2_1053), two transmembrane proteins (BAB2_1050 and BAB2_1051) and a solute-binding protein (BAB2_1049).

The protein localises to the cell inner membrane. Functionally, probably part of an ABC transporter complex that could be involved in peptide import. Probably responsible for energy coupling to the transport system. This Brucella abortus (strain 2308) protein is Putative peptide import ATP-binding protein BAB2_1053.